The chain runs to 656 residues: Choline transporter-like protein 1 (656 aa).

G2 carries the N-myristoyl glycine lipid modification. The Cytoplasmic segment spans residues 2 to 29 (GCCSSASAAQSSKREWKPLEDRSCTDIP). A helical membrane pass occupies residues 30 to 50 (WLLLFVLFCIGMGFICGFSVA). Over 51–211 (TGAAARLVSG…RLISGVMTSK (161 aa)) the chain is Extracellular. N134 and N179 each carry an N-linked (GlcNAc...) asparagine glycan. The chain crosses the membrane as a helical span at residues 212-232 (EIILGLCLLSLVLSMILMVII). The Cytoplasmic segment spans residues 233 to 237 (RYISR). Residues 238–258 (VLVWILTILVILGSLGGTGVL) form a helical membrane-spanning segment. Residues 259–287 (WWLYAKQRRSPKETVIPEQLQIAEDNLRA) lie on the Extracellular side of the membrane. A helical membrane pass occupies residues 288–308 (LLIYAISATVFTVILFLIMLV). Over 309–314 (MRKRVA) the chain is Cytoplasmic. Residues 315 to 335 (LTIALFHVAGKVFIHLPLLVF) traverse the membrane as a helical segment. Topologically, residues 336–337 (QP) are extracellular. The helical transmembrane segment at 338–358 (FWTFFALVLFWAYWIMTLLFL) threads the bilayer. The Cytoplasmic portion of the chain corresponds to 359 to 379 (GTTGSAVQNEQGFVEYKISGP). The chain crosses the membrane as a helical span at residues 380 to 400 (LQYMWWYHVVGLIWISEFILA). The Extracellular segment spans residues 401 to 441 (CQQMTVAGAVVTYYFTRDKRNLPFTPILASVNRLIRYHLGT). A helical membrane pass occupies residues 442 to 462 (VAKGSFIITLVKIPRMILMYI). Residues 463-536 (HSQLKGKENA…RVAAINTVGD (74 aa)) are Cytoplasmic-facing. The helical transmembrane segment at 537–557 (FMLFLGKVLIVCSTGLAGIML) threads the bilayer. At 558 to 565 (LNYQQDYT) the chain is on the extracellular side. Residues 566 to 586 (VWVLPLIIVCLFAFLVAHCFL) form a helical membrane-spanning segment. At 587-656 (SIYEMVVDVL…KPMASGASSA (70 aa)) the chain is on the cytoplasmic side. A disordered region spans residues 635 to 656 (AGKGGAADARKLKPMASGASSA). S651 bears the Phosphoserine mark.

It belongs to the CTL (choline transporter-like) family. As to expression, expressed in neurons, oligodendrocytes and astrocytes. Also expressed in the mucosal cell layer of the colon. In the developing brain, isoform 1 is expressed in both neurons and oligodendroglial cells, whereas isoform 2 is restricted to oligodendroglial cells.

The protein resides in the cell membrane. The protein localises to the mitochondrion outer membrane. It catalyses the reaction choline(out) + n H(+)(in) = choline(in) + n H(+)(out). The enzyme catalyses ethanolamine(out) + n H(+)(in) = ethanolamine(in) + n H(+)(out). Its function is as follows. Choline transporter, acts as a choline/H+ antiporter. Also acts as a high-affinity ethanolamine/H+ antiporter, regulating the supply of extracellular ethanolamine (Etn) for the CDP-Etn pathway, redistribute intracellular Etn and balance the CDP-Cho and CDP-Etn arms of the Kennedy pathway. Involved in membrane synthesis and myelin production. This is Choline transporter-like protein 1 (Slc44a1) from Rattus norvegicus (Rat).